The sequence spans 177 residues: Large ribosomal subunit protein uL6 (177 aa).

Belongs to the universal ribosomal protein uL6 family. In terms of assembly, part of the 50S ribosomal subunit.

Functionally, this protein binds to the 23S rRNA, and is important in its secondary structure. It is located near the subunit interface in the base of the L7/L12 stalk, and near the tRNA binding site of the peptidyltransferase center. This chain is Large ribosomal subunit protein uL6, found in Rhodopseudomonas palustris (strain HaA2).